A 75-amino-acid polypeptide reads, in one-letter code: UPF0352 protein VV1_3121 (75 aa).

Belongs to the UPF0352 family.

The polypeptide is UPF0352 protein VV1_3121 (Vibrio vulnificus (strain CMCP6)).